Here is a 247-residue protein sequence, read N- to C-terminus: Myelin-oligodendrocyte glycoprotein (247 aa).

The first 29 residues, 1 to 29 (MASLSRPSLPSCLCSFLLLLLLQVSSSYA), serve as a signal peptide directing secretion. The Extracellular segment spans residues 30 to 154 (GQFRVIGPRH…EDPFYWVSPG (125 aa)). The Ig-like V-type domain maps to 32–145 (FRVIGPRHPI…EEAAMELKVE (114 aa)). A disulfide bridge links C53 with C127. N60 carries N-linked (GlcNAc...) asparagine glycosylation. A helical membrane pass occupies residues 155-175 (VLVLLAVLPVLLLQITVGLIF). The Cytoplasmic segment spans residues 176–210 (LCLQYRLRGKLRAEIENLHRTFDPHFLRVPCWKIT). A helical transmembrane segment spans residues 211–231 (LFVIVPVLGPLVALIICYNWL). Topologically, residues 232 to 247 (HRRLAGQFLEELRNPF) are extracellular.

It belongs to the immunoglobulin superfamily. BTN/MOG family. As to quaternary structure, homodimer. May form heterodimers between the different isoforms. In terms of assembly, (Microbial infection) Interacts with rubella virus E2 glycoprotein. As to expression, found exclusively in the CNS, where it is localized on the surface of myelin and oligodendrocyte cytoplasmic membranes.

It is found in the cell membrane. Functionally, mediates homophilic cell-cell adhesion. Minor component of the myelin sheath. May be involved in completion and/or maintenance of the myelin sheath and in cell-cell communication. Its function is as follows. (Microbial infection) Acts as a receptor for rubella virus. The polypeptide is Myelin-oligodendrocyte glycoprotein (MOG) (Homo sapiens (Human)).